The sequence spans 544 residues: Chaperonin GroEL (544 aa).

ATP contacts are provided by residues 30–33 (TLGP), K51, 87–91 (DGTTT), G415, 480–482 (DAA), and D496.

The protein belongs to the chaperonin (HSP60) family. Forms a cylinder of 14 subunits composed of two heptameric rings stacked back-to-back. Interacts with the co-chaperonin GroES.

The protein resides in the cytoplasm. It carries out the reaction ATP + H2O + a folded polypeptide = ADP + phosphate + an unfolded polypeptide.. Its function is as follows. Together with its co-chaperonin GroES, plays an essential role in assisting protein folding. The GroEL-GroES system forms a nano-cage that allows encapsulation of the non-native substrate proteins and provides a physical environment optimized to promote and accelerate protein folding. This chain is Chaperonin GroEL, found in Sulfurihydrogenibium sp. (strain YO3AOP1).